The primary structure comprises 333 residues: 3-isopropylmalate/3-methylmalate dehydrogenase (333 aa).

Residues Arg81, Arg91, Arg112, and Asp203 each coordinate substrate. Mg(2+)-binding residues include Asp203, Asp227, and Asp231. 260 to 272 is an NAD(+) binding site; the sequence is GSAPDIAGKKIAN.

The protein belongs to the isocitrate and isopropylmalate dehydrogenases family. As to quaternary structure, homotetramer. It depends on Mg(2+) as a cofactor. The cofactor is Mn(2+).

It localises to the cytoplasm. It catalyses the reaction (2R,3S)-3-isopropylmalate + NAD(+) = 4-methyl-2-oxopentanoate + CO2 + NADH. It carries out the reaction (2R,3S)-3-methylmalate + NAD(+) = 2-oxobutanoate + CO2 + NADH. The enzyme catalyses (R)-malate + NAD(+) = pyruvate + CO2 + NADH. Its pathway is amino-acid biosynthesis; L-leucine biosynthesis; L-leucine from 3-methyl-2-oxobutanoate: step 3/4. It participates in amino-acid biosynthesis; L-isoleucine biosynthesis; 2-oxobutanoate from pyruvate: step 3/3. Functionally, catalyzes the oxidation of 3-carboxy-2-hydroxy-4-methylpentanoate (3-isopropylmalate) to 3-carboxy-4-methyl-2-oxopentanoate, which decarboxylates to 4-methyl-2-oxopentanoate (2-oxoisocaproate). Also catalyzes the oxidative decarboxylation of 3-methylmalate to 2-oxobutyrate, and that of D-malate to pyruvate. Cannot use NADP(+) instead of NAD(+). Cannot catalyze the oxidation of L-malate, L-tartrate, D-tartrate, DL-isocitrate, or DL-lactate. The chain is 3-isopropylmalate/3-methylmalate dehydrogenase (leuB) from Methanocaldococcus jannaschii (strain ATCC 43067 / DSM 2661 / JAL-1 / JCM 10045 / NBRC 100440) (Methanococcus jannaschii).